A 902-amino-acid polypeptide reads, in one-letter code: Protein translocase subunit SecA (902 aa).

ATP is bound by residues Gln87, Gly105 to Thr109, and Asp512. Positions Asp847–Ala902 are disordered. Cys885, Cys887, Cys896, and His897 together coordinate Zn(2+). The span at Lys891–Ala902 shows a compositional bias: basic residues.

This sequence belongs to the SecA family. Monomer and homodimer. Part of the essential Sec protein translocation apparatus which comprises SecA, SecYEG and auxiliary proteins SecDF-YajC and YidC. Zn(2+) is required as a cofactor.

It localises to the cell inner membrane. Its subcellular location is the cytoplasm. It carries out the reaction ATP + H2O + cellular proteinSide 1 = ADP + phosphate + cellular proteinSide 2.. Functionally, part of the Sec protein translocase complex. Interacts with the SecYEG preprotein conducting channel. Has a central role in coupling the hydrolysis of ATP to the transfer of proteins into and across the cell membrane, serving both as a receptor for the preprotein-SecB complex and as an ATP-driven molecular motor driving the stepwise translocation of polypeptide chains across the membrane. The protein is Protein translocase subunit SecA of Edwardsiella ictaluri (strain 93-146).